A 577-amino-acid chain; its full sequence is Cleavage stimulation factor subunit 2 (577 aa).

S14 carries the post-translational modification Phosphoserine. Residues 16–94 (RSVFVGNIPY…RALRVDNAAS (79 aa)) enclose the RRM domain. Residues 108 to 248 (APVIESPYGE…VNGAPPLMQA (141 aa)) are interactions with CSTF3 and SYMPK. Residue K189 forms a Glycyl lysine isopeptide (Lys-Gly) (interchain with G-Cter in SUMO2) linkage. Positions 207–230 (PVHGAGPGSGSNVSMNQQNPQAPQ) are disordered. R308 carries the post-translational modification Omega-N-methylarginine. Positions 319–409 (RGLLGDAPND…DGRGGRDPRG (91 aa)) are disordered. Over residues 360–373 (PGHESRGPPPHELR) the composition is skewed to basic and acidic residues. The 1; approximate repeat unit spans residues 410 to 414 (IDARG). The 12 X 5 AA tandem repeats of M-E-A-R-[AG] stretch occupies residues 410–469 (IDARGMEARAMEARGLDARGLEARAMEARAMEARAMEARAMEARAMEVRGMEARGMDTRG). A run of 2 repeats spans residues 415-419 (MEARA) and 420-424 (MEARG). Residues 425-429 (LDARG) form a 4; approximate repeat. One copy of the 5; approximate repeat lies at 430-434 (LEARA). Repeat copies occupy residues 435–439 (MEARA), 440–444 (MEARA), 445–449 (MEARA), and 450–454 (MEARA). The stretch at 455–459 (MEVRG) is one 10; approximate repeat. Repeat unit 11 spans residues 460–464 (MEARG). One copy of the 12; approximate repeat lies at 465–469 (MDTRG). Omega-N-methylarginine occurs at positions 468 and 475. A disordered region spans residues 509-532 (LQGASIQGGSQPGGFSPGQNQVTP). Residues 514–577 (IQGGSQPGGF…EQIQKSTGAP (64 aa)) are interaction with RPO2TC1. Phosphoserine is present on residues S518 and S524.

The CSTF complex is composed of CSTF1 (50 kDa subunit), CSTF2 (64 kDa subunit) and CSTF3 (77 kDa subunit). CSTF2 directly interacts with CSTF3, SYMPK and RPO2TC1. Interacts with HSF1 in heat-stressed cells. Interacts with CPSF2, CPSF3 and FIP1L1. Interacts with DDX1.

The protein resides in the nucleus. Functionally, one of the multiple factors required for polyadenylation and 3'-end cleavage of mammalian pre-mRNAs. This subunit is directly involved in the binding to pre-mRNAs. The polypeptide is Cleavage stimulation factor subunit 2 (CSTF2) (Pongo abelii (Sumatran orangutan)).